Reading from the N-terminus, the 466-residue chain is Cysteine--tRNA ligase (466 aa).

C29 serves as a coordination point for Zn(2+). Residues 31–41 (PTVYNYIHIGN) carry the 'HIGH' region motif. Zn(2+)-binding residues include C209, H234, and E238. Positions 266 to 270 (KMSKS) match the 'KMSKS' region motif. ATP is bound at residue K269. The residue at position 270 (S270) is a Phosphoserine.

The protein belongs to the class-I aminoacyl-tRNA synthetase family. In terms of assembly, monomer. It depends on Zn(2+) as a cofactor.

It is found in the cytoplasm. It carries out the reaction tRNA(Cys) + L-cysteine + ATP = L-cysteinyl-tRNA(Cys) + AMP + diphosphate. The polypeptide is Cysteine--tRNA ligase (Bacillus velezensis (strain DSM 23117 / BGSC 10A6 / LMG 26770 / FZB42) (Bacillus amyloliquefaciens subsp. plantarum)).